Consider the following 259-residue polypeptide: Probable WRKY transcription factor 65 (259 aa).

Over residues 1–17 (MKRGLDMARSYNDHESS) the composition is skewed to basic and acidic residues. 2 disordered regions span residues 1–101 (MKRG…RCSS) and 126–165 (TSEHNHPWPLTSSTRNGPKPKPEPKPEPEPEVEPEAEEED). Positions 18-31 (QETGPESPNSSTFN) are enriched in polar residues. Over residues 47–69 (RSVEKRVVNVPMKEMEGSRHKGD) the composition is skewed to basic and acidic residues. Residues 68 to 134 (GDTTPPSDSW…YTSEHNHPWP (67 aa)) constitute a DNA-binding region (WRKY). The segment covering 154-165 (EPEVEPEAEEED) has biased composition (acidic residues).

It localises to the nucleus. Functionally, transcription factor. Interacts specifically with the W box (5'-(T)TGAC[CT]-3'), a frequently occurring elicitor-responsive cis-acting element. This chain is Probable WRKY transcription factor 65 (WRKY65), found in Arabidopsis thaliana (Mouse-ear cress).